The primary structure comprises 89 residues: Small ribosomal subunit protein uS15 (89 aa).

Residues 1–25 (MSLDTTEKQQLINTHQTHGTDTGSA) form a disordered region. The segment covering 8 to 25 (KQQLINTHQTHGTDTGSA) has biased composition (polar residues).

This sequence belongs to the universal ribosomal protein uS15 family. As to quaternary structure, part of the 30S ribosomal subunit. Forms a bridge to the 50S subunit in the 70S ribosome, contacting the 23S rRNA.

One of the primary rRNA binding proteins, it binds directly to 16S rRNA where it helps nucleate assembly of the platform of the 30S subunit by binding and bridging several RNA helices of the 16S rRNA. Its function is as follows. Forms an intersubunit bridge (bridge B4) with the 23S rRNA of the 50S subunit in the ribosome. The sequence is that of Small ribosomal subunit protein uS15 from Synechococcus sp. (strain CC9605).